The following is a 715-amino-acid chain: Polyribonucleotide nucleotidyltransferase (715 aa).

Positions 498 and 504 each coordinate Mg(2+). A KH domain is found at 565–625; that stretch reads PKVCMMQIKP…ETVKKTVAFI (61 aa). The S1 motif domain maps to 635-706; sequence GTCYQASILR…DRGRIDFLLL (72 aa).

It belongs to the polyribonucleotide nucleotidyltransferase family. It depends on Mg(2+) as a cofactor.

It localises to the cytoplasm. The catalysed reaction is RNA(n+1) + phosphate = RNA(n) + a ribonucleoside 5'-diphosphate. Involved in mRNA degradation. Catalyzes the phosphorolysis of single-stranded polyribonucleotides processively in the 3'- to 5'-direction. In Onion yellows phytoplasma (strain OY-M), this protein is Polyribonucleotide nucleotidyltransferase.